A 181-amino-acid polypeptide reads, in one-letter code: NAD(P)H-quinone oxidoreductase subunit I, chloroplastic (181 aa).

4Fe-4S ferredoxin-type domains are found at residues 52-81 (GRIH…VDWE) and 92-121 (KSYS…MTEE). Cysteine 61, cysteine 64, cysteine 67, cysteine 71, cysteine 101, cysteine 104, cysteine 107, and cysteine 111 together coordinate [4Fe-4S] cluster.

Belongs to the complex I 23 kDa subunit family. NDH is composed of at least 16 different subunits, 5 of which are encoded in the nucleus. The cofactor is [4Fe-4S] cluster.

It is found in the plastid. The protein resides in the chloroplast thylakoid membrane. The enzyme catalyses a plastoquinone + NADH + (n+1) H(+)(in) = a plastoquinol + NAD(+) + n H(+)(out). It carries out the reaction a plastoquinone + NADPH + (n+1) H(+)(in) = a plastoquinol + NADP(+) + n H(+)(out). Its function is as follows. NDH shuttles electrons from NAD(P)H:plastoquinone, via FMN and iron-sulfur (Fe-S) centers, to quinones in the photosynthetic chain and possibly in a chloroplast respiratory chain. The immediate electron acceptor for the enzyme in this species is believed to be plastoquinone. Couples the redox reaction to proton translocation, and thus conserves the redox energy in a proton gradient. The polypeptide is NAD(P)H-quinone oxidoreductase subunit I, chloroplastic (Zygnema circumcarinatum (Green alga)).